Consider the following 311-residue polypeptide: Acetaldehyde dehydrogenase (311 aa).

C131 acts as the Acyl-thioester intermediate in catalysis. NAD(+) is bound by residues 162-170 (SVGPGTRKN) and N273.

This sequence belongs to the acetaldehyde dehydrogenase family.

The catalysed reaction is acetaldehyde + NAD(+) + CoA = acetyl-CoA + NADH + H(+). The sequence is that of Acetaldehyde dehydrogenase from Ralstonia pickettii (strain 12J).